We begin with the raw amino-acid sequence, 346 residues long: Inner membrane protein YnjI (346 aa).

At 1–38 (MKKVLLQNHPGSEKYSFNGWEIFNSNFERMIKENKAML) the chain is on the periplasmic side. A helical membrane pass occupies residues 39–59 (LCKWGFYLTCVVAVMFVFAAI). The Cytoplasmic segment spans residues 60–68 (TSNGLNERG). Residues 69–89 (LITAGCSFLYLLIMMGLIVRA) form a helical membrane-spanning segment. The Periplasmic portion of the chain corresponds to 90-234 (GFKAKKEQLH…DCANHSSGKS (145 aa)). Residues 235 to 255 (SAKLIWAAELSWMISISSTAF) traverse the membrane as a helical segment. Topologically, residues 256–346 (QNGTIEEELA…PWGASSVKYS (91 aa)) are cytoplasmic.

It localises to the cell inner membrane. This is Inner membrane protein YnjI (ynjI) from Escherichia coli (strain K12).